The sequence spans 346 residues: D-alanine--D-alanine ligase (346 aa).

Residues 133–326 enclose the ATP-grasp domain; that stretch reads KFLAQKAGVK…LANSLPKERE (194 aa). 159 to 209 serves as a coordination point for ATP; the sequence is YPIILKPARLGSSIGVSVVHDDSELAYAKDVAFEFDKDVLVEPFIKGVKEY. Residues D282, E294, and N296 each contribute to the Mg(2+) site.

Belongs to the D-alanine--D-alanine ligase family. It depends on Mg(2+) as a cofactor. Requires Mn(2+) as cofactor.

Its subcellular location is the cytoplasm. The enzyme catalyses 2 D-alanine + ATP = D-alanyl-D-alanine + ADP + phosphate + H(+). Its pathway is cell wall biogenesis; peptidoglycan biosynthesis. Cell wall formation. The chain is D-alanine--D-alanine ligase from Campylobacter concisus (strain 13826).